A 209-amino-acid polypeptide reads, in one-letter code: Ribosomal RNA large subunit methyltransferase E (209 aa).

5 residues coordinate S-adenosyl-L-methionine: Gly-63, Trp-65, Asp-83, Asp-99, and Asp-124. Lys-164 serves as the catalytic Proton acceptor.

It belongs to the class I-like SAM-binding methyltransferase superfamily. RNA methyltransferase RlmE family.

The protein resides in the cytoplasm. It carries out the reaction uridine(2552) in 23S rRNA + S-adenosyl-L-methionine = 2'-O-methyluridine(2552) in 23S rRNA + S-adenosyl-L-homocysteine + H(+). In terms of biological role, specifically methylates the uridine in position 2552 of 23S rRNA at the 2'-O position of the ribose in the fully assembled 50S ribosomal subunit. The polypeptide is Ribosomal RNA large subunit methyltransferase E (Shewanella sp. (strain ANA-3)).